The primary structure comprises 207 residues: Thiamine-phosphate synthase (207 aa).

4-amino-2-methyl-5-(diphosphooxymethyl)pyrimidine is bound by residues 35 to 39 (QYRDK) and asparagine 67. Mg(2+) contacts are provided by aspartate 68 and aspartate 86. Position 105 (threonine 105) interacts with 4-amino-2-methyl-5-(diphosphooxymethyl)pyrimidine. 132–134 (SVT) lines the 2-[(2R,5Z)-2-carboxy-4-methylthiazol-5(2H)-ylidene]ethyl phosphate pocket. Lysine 135 contributes to the 4-amino-2-methyl-5-(diphosphooxymethyl)pyrimidine binding site. Position 162 (glycine 162) interacts with 2-[(2R,5Z)-2-carboxy-4-methylthiazol-5(2H)-ylidene]ethyl phosphate.

The protein belongs to the thiamine-phosphate synthase family. It depends on Mg(2+) as a cofactor.

The enzyme catalyses 2-[(2R,5Z)-2-carboxy-4-methylthiazol-5(2H)-ylidene]ethyl phosphate + 4-amino-2-methyl-5-(diphosphooxymethyl)pyrimidine + 2 H(+) = thiamine phosphate + CO2 + diphosphate. It carries out the reaction 2-(2-carboxy-4-methylthiazol-5-yl)ethyl phosphate + 4-amino-2-methyl-5-(diphosphooxymethyl)pyrimidine + 2 H(+) = thiamine phosphate + CO2 + diphosphate. The catalysed reaction is 4-methyl-5-(2-phosphooxyethyl)-thiazole + 4-amino-2-methyl-5-(diphosphooxymethyl)pyrimidine + H(+) = thiamine phosphate + diphosphate. The protein operates within cofactor biosynthesis; thiamine diphosphate biosynthesis; thiamine phosphate from 4-amino-2-methyl-5-diphosphomethylpyrimidine and 4-methyl-5-(2-phosphoethyl)-thiazole: step 1/1. Condenses 4-methyl-5-(beta-hydroxyethyl)thiazole monophosphate (THZ-P) and 2-methyl-4-amino-5-hydroxymethyl pyrimidine pyrophosphate (HMP-PP) to form thiamine monophosphate (TMP). In Pseudomonas putida (strain GB-1), this protein is Thiamine-phosphate synthase.